The following is a 2245-amino-acid chain: Myosin-J heavy chain (2245 aa).

Residues 25-77 (QEGAGVWIPDQELGWIGADVIEHSETSADQVLVRTEDDREVKIPLSKVFQKNP) form the Myosin N-terminal SH3-like domain. The Myosin motor domain maps to 81–821 (EGVDDLSFLS…QLASLEDMRL (741 aa)). 174–181 (GESGAGKT) provides a ligand contact to ATP. The segment at 646–672 (FTQSPGGHPQGNGGPTSSNTKGTSGSS) is disordered. The span at 660 to 672 (PTSSNTKGTSGSS) shows a compositional bias: low complexity. The tract at residues 669-749 (SGSSSMKFLS…GFPTRRLLSE (81 aa)) is actin-binding. IQ domains lie at 824–851 (LDRSATVIQKRWKGYLYRKRYKQLRDAS), 872–901 (RTHSAILIQKVWRAHRDRVQYQKIRDASLQ), and 943–972 (KLRGIILIQARWRMKLAKRVYIQLRAEARS). The stretch at 973–1812 (LRTVQEQKNK…NYHMLEDRME (840 aa)) forms a coiled coil. Residues 1504–1524 (KKQLTQLQQQHEQSSTQLLLA) form a disordered region. Over residues 1506-1523 (QLTQLQQQHEQSSTQLLL) the composition is skewed to low complexity. The 220-residue stretch at 1969–2188 (IDFIDQLQQS…IASICPPNKS (220 aa)) folds into the Dilute domain.

The protein belongs to the TRAFAC class myosin-kinesin ATPase superfamily. Myosin family. In terms of assembly, homodimer that associates with six light chains.

It is found in the contractile vacuole. Its function is as follows. Processive motor protein that can move over long distances along F-actin without disassociating; processiveness depends on high physiological Mg(2+) concentrations. Presents a high actin affinity in the presence of ADP, fast ATP hydrolysis, and a high steady-state ATPase activity in the presence of actin that is rate limited by ADP release. Physiological decrease of free Mg(2+) ions leads to an increased rate of ADP release and shortening of the fraction of time it spends in the strong acting binding states. This Dictyostelium discoideum (Social amoeba) protein is Myosin-J heavy chain (myoJ).